The following is a 704-amino-acid chain: Ubiquitin-like modifier-activating enzyme atg7 (704 aa).

The GXGXXG motif motif lies at 372-377 (GAGTLG). Cys-555 functions as the Glycyl thioester intermediate in the catalytic mechanism. The homodimerization stretch occupies residues 660-699 (ALTEKDYITELSGLAEVQRKAEAAANDVEWDSDEEGMEDE). Positions 682-704 (AAANDVEWDSDEEGMEDEEPELL) are disordered. Residues 687-704 (VEWDSDEEGMEDEEPELL) are compositionally biased toward acidic residues.

This sequence belongs to the ATG7 family. As to quaternary structure, homodimer. Interacts with ATG8 through a thioester bond between Cys-555 and the C-terminal Gly of ATG8 and with ATG12 through a thioester bond between Cys-555 and the C-terminal Gly of ATG12. Also interacts with ATG3.

It is found in the cytoplasm. The protein resides in the preautophagosomal structure. E1-like activating enzyme involved in the 2 ubiquitin-like systems required for cytoplasm to vacuole transport (Cvt) and autophagy. Activates ATG12 for its conjugation with ATG5 and ATG8 for its conjugation with phosphatidylethanolamine. Both systems are needed for the ATG8 association to Cvt vesicles and autophagosomes membranes. Autophagy is essential for maintenance of amino acid levels and protein synthesis under nitrogen starvation. Required for selective autophagic degradation of the nucleus (nucleophagy) as well as for mitophagy which contributes to regulate mitochondrial quantity and quality by eliminating the mitochondria to a basal level to fulfill cellular energy requirements and preventing excess ROS production. Required for normal mycelial growth and conidiogenesis, and regulates sclerotial formation. Plays an essential role in pathogenesis. This Botryotinia fuckeliana (strain T4) (Noble rot fungus) protein is Ubiquitin-like modifier-activating enzyme atg7.